Here is a 506-residue protein sequence, read N- to C-terminus: Lysine--tRNA ligase (506 aa).

Mg(2+)-binding residues include glutamate 416 and glutamate 423.

This sequence belongs to the class-II aminoacyl-tRNA synthetase family. In terms of assembly, homodimer. The cofactor is Mg(2+).

The protein localises to the cytoplasm. It carries out the reaction tRNA(Lys) + L-lysine + ATP = L-lysyl-tRNA(Lys) + AMP + diphosphate. This is Lysine--tRNA ligase from Xylella fastidiosa (strain M12).